The sequence spans 161 residues: Large ribosomal subunit protein uL11 (161 aa).

The protein belongs to the universal ribosomal protein uL11 family. In terms of assembly, part of the ribosomal stalk of the 50S ribosomal subunit. Interacts with L10 and the large rRNA to form the base of the stalk. L10 forms an elongated spine to which L12 dimers bind in a sequential fashion forming a multimeric L10(L12)X complex.

Forms part of the ribosomal stalk which helps the ribosome interact with GTP-bound translation factors. The protein is Large ribosomal subunit protein uL11 of Methanococcoides burtonii (strain DSM 6242 / NBRC 107633 / OCM 468 / ACE-M).